Here is a 201-residue protein sequence, read N- to C-terminus: Glycerol-3-phosphate acyltransferase (201 aa).

4 helical membrane passes run 4-24 (IASLVLAYLLGSVPFAVLVSL), 84-104 (EIAMVGLAVFIGHLWPVFLAF), 116-136 (VLLAVNPWLALIAAAVWLAVA), and 157-177 (AWFIEPGVYAGLTIVIALLLV).

This sequence belongs to the PlsY family. In terms of assembly, probably interacts with PlsX.

It is found in the cell inner membrane. The catalysed reaction is an acyl phosphate + sn-glycerol 3-phosphate = a 1-acyl-sn-glycero-3-phosphate + phosphate. Its pathway is lipid metabolism; phospholipid metabolism. Functionally, catalyzes the transfer of an acyl group from acyl-phosphate (acyl-PO(4)) to glycerol-3-phosphate (G3P) to form lysophosphatidic acid (LPA). This enzyme utilizes acyl-phosphate as fatty acyl donor, but not acyl-CoA or acyl-ACP. This Laribacter hongkongensis (strain HLHK9) protein is Glycerol-3-phosphate acyltransferase.